The sequence spans 552 residues: Hydroxylamine reductase (552 aa).

[2Fe-2S] cluster-binding residues include Cys-5, Cys-8, Cys-20, and Cys-27. Residues His-251, Glu-275, Cys-319, Cys-407, Cys-435, Cys-460, Glu-494, and Lys-496 each coordinate hybrid [4Fe-2O-2S] cluster. The residue at position 407 (Cys-407) is a Cysteine persulfide.

It belongs to the HCP family. [2Fe-2S] cluster is required as a cofactor. The cofactor is hybrid [4Fe-2O-2S] cluster.

The protein localises to the cytoplasm. It carries out the reaction A + NH4(+) + H2O = hydroxylamine + AH2 + H(+). In terms of biological role, catalyzes the reduction of hydroxylamine to form NH(3) and H(2)O. The polypeptide is Hydroxylamine reductase (Escherichia coli (strain UTI89 / UPEC)).